The chain runs to 251 residues: uncharacterized protein (251 aa).

5 helical membrane passes run 22-42 (FLGV…DIVI), 86-106 (FFLS…VILA), 120-140 (LASS…AGIV), 157-177 (LGYF…IPYV), and 205-225 (IVAW…SFLA).

Its subcellular location is the cell membrane. This is an uncharacterized protein from Mycoplasma pneumoniae (strain ATCC 29342 / M129 / Subtype 1) (Mycoplasmoides pneumoniae).